The chain runs to 135 residues: MLKKAIIKLLGIDNYIEKIEELEGERKEIFENFEKLNKKLDNFENELNFIKKEIERIQLEFNNVINSNNNDYVSKKELNDIVNQLNTLSTLVNGLIINISHGNNLKESSNTVDDVKNRLLELLQSEKDYCITEIN.

This is an uncharacterized protein from Methanocaldococcus jannaschii (strain ATCC 43067 / DSM 2661 / JAL-1 / JCM 10045 / NBRC 100440) (Methanococcus jannaschii).